We begin with the raw amino-acid sequence, 344 residues long: N-acetyl-gamma-glutamyl-phosphate reductase (344 aa).

The active site involves Cys-147.

The protein belongs to the NAGSA dehydrogenase family. Type 1 subfamily.

Its subcellular location is the cytoplasm. It carries out the reaction N-acetyl-L-glutamate 5-semialdehyde + phosphate + NADP(+) = N-acetyl-L-glutamyl 5-phosphate + NADPH + H(+). Its pathway is amino-acid biosynthesis; L-arginine biosynthesis; N(2)-acetyl-L-ornithine from L-glutamate: step 3/4. In terms of biological role, catalyzes the NADPH-dependent reduction of N-acetyl-5-glutamyl phosphate to yield N-acetyl-L-glutamate 5-semialdehyde. The polypeptide is N-acetyl-gamma-glutamyl-phosphate reductase (Bacillus amyloliquefaciens (Bacillus velezensis)).